The primary structure comprises 243 residues: Chromosome partition protein MukE (243 aa).

The disordered stretch occupies residues L223–E243. Acidic residues predominate over residues E233–E243.

The protein belongs to the MukE family. In terms of assembly, interacts, and probably forms a ternary complex, with MukF and MukB. The complex formation is stimulated by calcium or magnesium.

Its subcellular location is the cytoplasm. The protein resides in the nucleoid. Its function is as follows. Involved in chromosome condensation, segregation and cell cycle progression. May participate in facilitating chromosome segregation by condensation DNA from both sides of a centrally located replisome during cell division. Probably acts via its interaction with MukB and MukF. The chain is Chromosome partition protein MukE from Haemophilus influenzae (strain ATCC 51907 / DSM 11121 / KW20 / Rd).